We begin with the raw amino-acid sequence, 81 residues long: Cytotoxin 1 (81 aa).

Residues 1 to 21 (MKTLLLTLVVVTIVCLDLGYT) form the signal peptide. 4 cysteine pairs are disulfide-bonded: cysteine 24/cysteine 42, cysteine 35/cysteine 59, cysteine 63/cysteine 74, and cysteine 75/cysteine 80.

Belongs to the three-finger toxin family. Short-chain subfamily. Type IA cytotoxin sub-subfamily. Monomer in solution; Homodimer and oligomer in the presence of negatively charged lipids forming a pore with a size ranging between 20 and 30 Angstroms. As to expression, expressed by the venom gland.

Its subcellular location is the secreted. It localises to the target cell membrane. Its function is as follows. Basic protein that binds to cell membrane and depolarizes cardiomyocytes. It also shows lytic activities on many other cells, including red blood cells. Interaction with sulfatides in the cell membrane induces pore formation and cell internalization and is responsible for cytotoxicity in cardiomyocytes. It targets the mitochondrial membrane and induces mitochondrial swelling and fragmentation. It binds to the integrin alpha-V/beta-3 (ITGAV/ITGB3) with a moderate affinity and inhibits protein kinases C. It also binds with high affinity to heparin. It also causes skeletal muscle necrosis after intramuscular injection into mice. In Naja atra (Chinese cobra), this protein is Cytotoxin 1.